Consider the following 609-residue polypeptide: UvrABC system protein C (609 aa).

Positions S16 to V94 constitute a GIY-YIG domain. Residues Q203 to V238 enclose the UVR domain.

The protein belongs to the UvrC family. In terms of assembly, interacts with UvrB in an incision complex.

It is found in the cytoplasm. Its function is as follows. The UvrABC repair system catalyzes the recognition and processing of DNA lesions. UvrC both incises the 5' and 3' sides of the lesion. The N-terminal half is responsible for the 3' incision and the C-terminal half is responsible for the 5' incision. This chain is UvrABC system protein C, found in Shewanella baltica (strain OS185).